Consider the following 393-residue polypeptide: Ig heavy chain C region (393 aa).

Ig-like domains follow at residues 63 to 157 (PTVI…RNIT), 168 to 260 (PVIK…ASIH), and 270 to 370 (PSVS…RTVN). N119, N155, N200, N230, N329, N366, N370, and N380 each carry an N-linked (GlcNAc...) asparagine glycan.

The sequence is that of Ig heavy chain C region from Heterodontus francisci (Horn shark).